Consider the following 59-residue polypeptide: MAVPARKTSKTKKRMRRGHIKLNVPGLTPCPNCGELRKSHMVCPSCGYYDGKQVVNTNN.

The protein belongs to the bacterial ribosomal protein bL32 family.

The chain is Large ribosomal subunit protein bL32 from Limosilactobacillus reuteri (strain DSM 20016) (Lactobacillus reuteri).